The chain runs to 559 residues: Cation/calcium exchanger 2 (559 aa).

Transmembrane regions (helical) follow at residues 10-30, 86-106, 131-151, 167-187, 203-223, 224-244, 331-351, 362-382, 393-413, 416-436, 480-500, 506-526, and 531-551; these read FGYL…GFFT, GFPI…FYLL, VAGV…ASLV, TVVG…SISL, ICFF…GKIN, FWGA…VVLS, WSKP…SFLW, AGVV…IAGA, WLLP…YISA, LVAL…ILGL, FALG…SIVI, LLES…VLFS, and LGGV…SLRI.

The protein belongs to the Ca(2+):cation antiporter (CaCA) (TC 2.A.19) family. Cation/calcium exchanger (CCX) subfamily.

The protein resides in the membrane. Its function is as follows. Membrane-localized H(+)-dependent K(+) and Na(+) transporter. This is Cation/calcium exchanger 2 (CCX2) from Arabidopsis thaliana (Mouse-ear cress).